A 611-amino-acid polypeptide reads, in one-letter code: Leukotriene A-4 hydrolase (611 aa).

Lys73 carries the post-translational modification N6-acetyllysine. A peptide is bound by residues 135-137 (QCQ) and 267-272 (PYGGME). His296 lines the Zn(2+) pocket. The Proton acceptor role is filled by Glu297. Residues His300 and Glu319 each coordinate Zn(2+). An N6-acetyllysine modification is found at Lys337. Tyr384 acts as the Proton donor in catalysis. Position 414 is an N6-acetyllysine (Lys414). Ser416 is subject to Phosphoserine. Residue 564 to 566 (RMK) coordinates a peptide. At Lys573 the chain carries N6-acetyllysine.

The protein belongs to the peptidase M1 family. Monomer. The cofactor is Zn(2+). Phosphorylation at Ser-416 inhibits leukotriene-A4 hydrolase activity. activity.

It is found in the cytoplasm. The enzyme catalyses leukotriene A4 + H2O = leukotriene B4. It carries out the reaction (5S,6S)-epoxy-(18R)-hydroxy-(7E,9E,11Z,14Z,16E)-eicosapentaenoate + H2O = resolvin E1. It catalyses the reaction (5S,6S)-epoxy-(18S)-hydroxy-(7E,9E,11Z,14Z,16E)-eicosapentaenoate + H2O = 18S-resolvin E1. The catalysed reaction is Release of the N-terminal residue from a tripeptide.. It participates in lipid metabolism; leukotriene B4 biosynthesis. Its activity is regulated as follows. Inhibited by bestatin. The epoxide hydrolase activity is restrained by suicide inactivation that involves binding of LTA4 to Tyr-379. 4-(4-benzylphenyl)thiazol-2-amine (ARM1) selectively inhibits the epoxide hydrolase activity. In terms of biological role, bifunctional zinc metalloenzyme that comprises both epoxide hydrolase (EH) and aminopeptidase activities. Acts as an epoxide hydrolase to catalyze the conversion of LTA4 to the pro-inflammatory mediator leukotriene B4 (LTB4). Also has aminopeptidase activity, with high affinity for N-terminal arginines of various synthetic tripeptides. In addition to its pro-inflammatory EH activity, may also counteract inflammation by its aminopeptidase activity, which inactivates by cleavage another neutrophil attractant, the tripeptide Pro-Gly-Pro (PGP), a bioactive fragment of collagen generated by the action of matrix metalloproteinase-9 (MMP9) and prolylendopeptidase (PREPL). Involved also in the biosynthesis of resolvin E1 and 18S-resolvin E1 from eicosapentaenoic acid, two lipid mediators that show potent anti-inflammatory and pro-resolving actions. This chain is Leukotriene A-4 hydrolase (LTA4H), found in Bos taurus (Bovine).